Consider the following 98-residue polypeptide: Integration host factor subunit beta (98 aa).

Belongs to the bacterial histone-like protein family. As to quaternary structure, heterodimer of an alpha and a beta chain.

Its function is as follows. This protein is one of the two subunits of integration host factor, a specific DNA-binding protein that functions in genetic recombination as well as in transcriptional and translational control. The sequence is that of Integration host factor subunit beta from Pseudomonas putida (strain W619).